A 346-amino-acid polypeptide reads, in one-letter code: MMSDLTPIFRKYVAVIDDARNEQNGIDDHVERKQEDFGNSNETCEMFRDSFIKECARLLKFLVELNKVIKQIEKNYLDDFNMSDAEKDEFDMECRLQIQQYFKKFEFLENYEMERHNLSLKRFQSKSHRWSKILSNKNDNTKHVIHPQDIENGVYEFRLGVLRCLNLWIKYVSSKFTTIQQERLILENKMNFNSTPMPTLSNNADDFSADAIDISVSQSAPVETVQDEVKHYEETISKLTQEQLQVLETEHSELLNQKNEQLKKVETINKTILDIVNIQNELSNHLTVQSQNINLMLNNQDDIELNIKKGNKELRKAKRAAGRTAKMTTYGAIIMGVFILFLDYVG.

Residues 1 to 324 (MMSDLTPIFR…RKAKRAAGRT (324 aa)) are Cytoplasmic-facing. Residues 255 to 317 (LNQKNEQLKK…KKGNKELRKA (63 aa)) form the t-SNARE coiled-coil homology domain. Residues 325-342 (AKMTTYGAIIMGVFILFL) form a helical; Anchor for type IV membrane protein membrane-spanning segment. Topologically, residues 343-346 (DYVG) are lumenal.

Belongs to the syntaxin family. As to quaternary structure, component of a SNARE complex consisting of UFE1, USE1, SEC20 and SEC22 or YKT6.

The protein localises to the endoplasmic reticulum membrane. Syntaxin required for targeting and fusion of Golgi-derived retrograde transport vesicles with the ER. The chain is Syntaxin UFE1 (UFE1) from Saccharomyces cerevisiae (strain ATCC 204508 / S288c) (Baker's yeast).